We begin with the raw amino-acid sequence, 783 residues long: Ras and Rab interactor 1 (783 aa).

Met1 bears the N-acetylmethionine mark. The disordered stretch occupies residues 1 to 53 (MESPGESGAGSPGAPSPSSFTTGHLAREKPAQDPLYDVPNASGGQAGGPQRPG). Phosphoserine occurs at positions 3 and 16. Tyr36 is subject to Phosphotyrosine; by ABL1 and ABL2. Residues 69–163 (WLQLQANAAA…ILLLPLQLPR (95 aa)) form the SH2 domain. Residues Ser210, Ser258, Ser333, and Ser337 each carry the phosphoserine modification. Disordered regions lie at residues 250–282 (STETSSPLSPPAVPPPPVPVLPGAVPSQTERLP) and 295–342 (YRVP…HLGR). Pro residues predominate over residues 257 to 269 (LSPPAVPPPPVPV). Residues 294-727 (GYRVPAGSGP…GSGQSEARSR (434 aa)) form a ras and 14-3-3 protein binding region region. Residues 317-334 (GSPSSSEEEGVPGSRGSP) show a composition bias toward low complexity. A Phosphoserine; by PKD/PRKD1 modification is found at Ser351. The VPS9 domain occupies 456–598 (LAADGSLGRL…LSGLGQAHTL (143 aa)). Ser609 and Ser611 each carry phosphoserine. One can recognise a Ras-associating domain in the interval 624 to 706 (FQHLLRVAYQ…GYLVYRRAEW (83 aa)). Arg692 carries the post-translational modification Omega-N-methylarginine. A disordered region spans residues 709–783 (TQGAVTEEEG…EAEGSRAAEE (75 aa)). Positions 762 to 772 (QAQEGPAQPGE) are enriched in low complexity.

It belongs to the RIN (Ras interaction/interference) family. Interacts with the GTP-bound form of Ras proteins (NRAS, HRAS and KRAS). This interaction prevents the association between RAF1 and Ras. Interacts with 14-3-3 proteins YWHAB, YWHAE and YWHAZ when phosphorylated on Ser-351. Interacts with the SH3 domain of ABL1 and ABL2. Interacts with RAB5A. The interaction with Ras is probably regulated and antagonized by the interaction with 14-3-3 proteins. The interaction with 14-3-3 proteins is regulated by phosphorylation on Ser-351. Post-translationally, phosphorylated on tyrosine residues by ABL1 and ABL2. Phosphorylation at Ser-351 by PRKD1 induces interaction with 14-3-3 proteins. As to expression, expressed in all tissues examined with high levels in brain, placenta and pancreas.

The protein localises to the cytoplasm. The protein resides in the membrane. It localises to the cytoskeleton. Functionally, ras effector protein, which may serve as an inhibitory modulator of neuronal plasticity in aversive memory formation. Can affect Ras signaling at different levels. First, by competing with RAF1 protein for binding to activated Ras. Second, by enhancing signaling from ABL1 and ABL2, which regulate cytoskeletal remodeling. Third, by activating RAB5A, possibly by functioning as a guanine nucleotide exchange factor (GEF) for RAB5A, by exchanging bound GDP for free GTP, and facilitating Ras-activated receptor endocytosis. This Homo sapiens (Human) protein is Ras and Rab interactor 1 (RIN1).